Here is a 315-residue protein sequence, read N- to C-terminus: Probable cytosolic iron-sulfur protein assembly protein CIAO1 homolog (315 aa).

7 WD repeats span residues 11–50, 56–95, 100–139, 145–188, 189–229, 236–275, and 283–315; these read GHED…WVCK, GHQR…FESC, GHEN…EFEC, CHSQ…CTLD, KHAS…RSWE, RHPR…CSWR, and AHSQ…WQID.

It belongs to the WD repeat CIA1 family.

Functionally, essential component of the cytosolic iron-sulfur (Fe/S) protein assembly machinery. Required for the maturation of extramitochondrial Fe/S proteins. The protein is Probable cytosolic iron-sulfur protein assembly protein CIAO1 homolog of Ixodes scapularis (Black-legged tick).